A 383-amino-acid chain; its full sequence is Insecticidal crystal protein Cry35Ab1 (383 aa).

The 113-residue stretch at 26–138 folds into the Ricin B-type lectin domain; the sequence is DDSGVSLMNK…NNPNQQWNLT (113 aa).

This sequence belongs to the toxin_10 family. In terms of assembly, monomer in solution. Copurifies from parasporal inclusion bodies with Cry34Ab1. In terms of processing, proteolytic processing occurs near the C-terminus yielding a stable protein of approximately 40 kDa; this may be the active form of the protein.

In terms of biological role, component of a binary insecticidal toxin active on western corn rootworm (WCR, Diabrotica virgifera subsp. virgifera Le Conte) and probably also on northern corn rootworm (D.barberi). Both proteins are required for maximal toxicity. The larval midgut epithelium is probably the primary target. This protein alone has no activity against southern corn rootworm (Diabrotica undecimpunctata howardi Barber), but it synergizes the toxic effect of its Cry34Ab1 partner. The 2 proteins individually and together form ion channels; channels made in the presence of the 2 proteins have higher conductance. Binds to WCR third instar midgut brush border membrane vesicles; binding improves over 10-fold in the presence of Cry34Ab1. The protein is Insecticidal crystal protein Cry35Ab1 of Bacillus thuringiensis.